Reading from the N-terminus, the 837-residue chain is MKTKNFPLNKIAFACTLLLANPVAWAEDQFDASLWGGGSVLGIDFARFNVKNAVLPGRYEAQIYVNNEEKGESDIIFADNPATGRAELCFTPKLQEMLDLMDEAIVKSPNSEDDTCVFASDAIPKGTFDYQGGDMKLKLEIPQALTIRRPRGYIAPSRWQTGTNAAFANYDINYYRSGNPEVKSESLYVGLRGGVNFGNWALRHNGSFSRFENQSSSGFTDKGKNHYERGDTYLQRDFALLRGNVTVGDFFSTARIGENFGLRGLRIASDDRMLAPSQRGFAPVVRGVANTNAKVSIKQNGYTIYQITVPAGPFVINDLYASGYSGDLTVEIQESDGKVRSFIVPFSNLAPLMRVGHLRYQLAGGRYRIDSRTFDERVLQGVLQYGLTNHLTLNSSLLYTRHYRAGLFGFGLNTPIGAFSADATWSHAEFPLKKVSKNGYSLHGSYSINFNEIGTNLTLAAYRYSSRDFYTLSDTIGLNRTFRQFSGAYLPEIYRPKNQFQVSLSQSLGNWGNLYLSGQTYNYWEKRGTNTQYQVAYSNSFHILNYSVNLSQSIDKETGKRDNSIYLSLSLPLGDNHSADSSYSRSGNDINQRLGVNGSFGERHQWSYGINASRNNQGYRSYDGNLSHNNSIGSYRASYSRDSLKNRSTSLGVSGAVVAHKYGITLSQPVGESFAIIHAKDAAGAKVESGANVSLDYFGNAVVPYTSPYEINYIGINPSDAEANVEFEATERQIIPRANSISLVDFRTGKNTMVLFNLTLPNGEPVPMASTAQDSEGAFVGDVVQGGVLFANKLTQPKGELIVKWGERESEQCRFHYQVDLDNAQIQNHDIQCKTAE.

The signal sequence occupies residues 1–26 (MKTKNFPLNKIAFACTLLLANPVAWA). A disulfide bridge connects residues Cys-813 and Cys-833.

It belongs to the fimbrial export usher family.

The protein resides in the cell outer membrane. Essential for piliation. The sequence is that of Outer membrane usher protein HifC (hifC) from Haemophilus influenzae.